The following is a 217-amino-acid chain: MKKPEVKYCGIRSKRDYELAAASGADYLGFIFAASKRRVTPGEVRKWKEKVLTDKKHVGVFVNETIENIAQIASDLALDVIQLHGDESPEDARRLRPLVRSEIWKALHHGEGTLRQMAQFAPAVDGYVIDSSVKGMRGGTGIAFSWARVPLYRKQAQNANKRCFIAGGVNPETITGLLRSRPCGIDLASGIEKNGQKDQTLIRLLEERMNHYVSISK.

This sequence belongs to the TrpF family.

The enzyme catalyses N-(5-phospho-beta-D-ribosyl)anthranilate = 1-(2-carboxyphenylamino)-1-deoxy-D-ribulose 5-phosphate. Its pathway is amino-acid biosynthesis; L-tryptophan biosynthesis; L-tryptophan from chorismate: step 3/5. The polypeptide is N-(5'-phosphoribosyl)anthranilate isomerase (Bacillus velezensis (strain DSM 23117 / BGSC 10A6 / LMG 26770 / FZB42) (Bacillus amyloliquefaciens subsp. plantarum)).